The primary structure comprises 267 residues: Protein COFACTOR ASSEMBLY OF COMPLEX C SUBUNIT B CCB1, chloroplastic (267 aa).

The transit peptide at 1–44 directs the protein to the chloroplast; the sequence is MATKLISPPLSCPWVTSREVIIKGLPRRRREWMVTKRNRVSAVT. Residues 45 to 84 are Lumenal-facing; it reads AMIVEPLSVVSSSAIQIHQWWEQNPNSLLLMTEATGGYSL. Residues 85-105 form a helical membrane-spanning segment; sequence ASYYTSLGLFVISVPGLWSLI. Over 106–164 the chain is Stromal; that stretch reads KRSVKSKIVRKTFVVNDVKKEPKQVAGEILSFFTRKNFNITDRGETITFEGKMVPSRGQ. A helical transmembrane segment spans residues 165–185; it reads AALLTFCTCISLASVGLVLTI. A topological domain (lumenal) is located at residue T186. A helical transmembrane segment spans residues 187–207; it reads VPDFGNNWFFIILLSPLAGVY. At 208–267 the chain is on the stromal side; it reads YWKKASRKEEIKVKMMVGSKGRLDEIVVQGDDVQVEEMRKELQLNEKGMVYVKGLFERSS.

It is found in the plastid. The protein localises to the chloroplast thylakoid membrane. In terms of biological role, required for the biogenesis and accumulation of native cytochrome b6 in the thylakoid membrane. Controls the conversion of apocytochrome b6 to holocytochrome b6. Required for covalent binding of the c-type heme to cytochrome b6. This is Protein COFACTOR ASSEMBLY OF COMPLEX C SUBUNIT B CCB1, chloroplastic from Arabidopsis thaliana (Mouse-ear cress).